The following is a 114-amino-acid chain: uncharacterized protein (114 aa).

A disordered region spans residues 1–37; that stretch reads MLKKILSLFKKEEPKTEEKPTEVEEKKEEREEKEEKK. Basic and acidic residues predominate over residues 9–37; that stretch reads FKKEEPKTEEKPTEVEEKKEEREEKEEKK.

This is an uncharacterized protein from Aquifex aeolicus (strain VF5).